The chain runs to 235 residues: PRA1 family protein 1 (235 aa).

Polar residues predominate over residues 1–17 (MESNSNSNETMYGNPNI). A disordered region spans residues 1-55 (MESNSNSNETMYGNPNINMGFVDSGNSNIGNNTGSMSPPPQQQQQPQQASSTPAG). Residues 24-48 (SGNSNIGNNTGSMSPPPQQQQQPQQ) are compositionally biased toward low complexity. Transmembrane regions (helical) follow at residues 144 to 164 (SVFF…LLFI) and 187 to 207 (AFLS…LVGA).

It belongs to the PRA1 family.

It localises to the membrane. May act as a general Rab protein regulator. The sequence is that of PRA1 family protein 1 (prafA) from Dictyostelium discoideum (Social amoeba).